The sequence spans 785 residues: Rho GTPase-activating protein 10 (785 aa).

The BAR domain maps to 7–262 (EFSDCYLDSP…IRQNPKDHKR (256 aa)). Residues 265–372 (QFTAEGYLYV…WLEVLGGKEA (108 aa)) enclose the PH domain. The Rho-GAP domain occupies 389–574 (AQLDKMGFTI…ILIENHEKIF (186 aa)). Residues 576-708 (TPPDATLPEP…PAVTPPSPKL (133 aa)) form a disordered region. Pro residues predominate over residues 584 to 595 (EPGPLSAPPNAP). Residues 598–608 (QSKRQGQRTKR) are compositionally biased toward basic residues. Basic and acidic residues predominate over residues 622–632 (GDRPSLPKEDT). Residues 633–650 (PPSSLDSLSSPSPTTATA) are compositionally biased toward low complexity. A compositionally biased stretch (polar residues) spans 675 to 697 (APSQARSSAVQWLNPQSPTTPSC). One can recognise an SH3 domain in the interval 727–785 (IISRKARAVYPCEAEHSSELSFEIGAIFEDVQTSREPGWLEGTLNGKRGLIPQNYVKLL).

Interacts with PKN3. Interacts with caspase-activated PAK2 proteolytic fragment PAK-2p34; the interaction does not affect ARHGAP10 GTPase activation activity towards RHOA and CDC42. Interacts via its SH3 domain with PTK2/FAK1. Interacts with PTK2B/PYK2; the interaction negatively regulates ARHGAP10 GTPase-activating activity. Interacts with MICAL1 and WDR44; complex formation might transit from GRAF2/ARHGAP10-MICAL1 to GRAF2/ARHGAP10-WDR44 complexes.

The protein resides in the cytoplasm. It localises to the perinuclear region. The protein localises to the cell membrane. It is found in the endosome membrane. GTPase-activating protein that catalyzes the conversion of active GTP-bound Rho GTPases to their inactive GDP-bound form, thus suppressing various Rho GTPase-mediated cellular processes. Also converts Cdc42 to an inactive GDP-bound state. Essential for PTKB2 regulation of cytoskeletal organization via Rho family GTPases. Inhibits PAK2 proteolytic fragment PAK-2p34 kinase activity and changes its localization from the nucleus to the perinuclear region. Stabilizes PAK-2p34 thereby increasing stimulation of cell death. Associates with MICAL1 on the endosomal membrane to promote Rab8-Rab10-dependent tubule extension. After dissociation with MICAL1, recruits WDR44 which connects the endoplasmic reticulum (ER) with the endosomal tubule, thereby participating in the export of a subset of neosynthesized proteins. This is Rho GTPase-activating protein 10 (ARHGAP10) from Bos taurus (Bovine).